The primary structure comprises 89 residues: Small ribosomal subunit protein uS14A (89 aa).

The protein belongs to the universal ribosomal protein uS14 family. In terms of assembly, part of the 30S ribosomal subunit. Contacts proteins S3 and S10.

In terms of biological role, binds 16S rRNA, required for the assembly of 30S particles and may also be responsible for determining the conformation of the 16S rRNA at the A site. This chain is Small ribosomal subunit protein uS14A, found in Limosilactobacillus reuteri (strain DSM 20016) (Lactobacillus reuteri).